Consider the following 217-residue polypeptide: Uracil-DNA glycosylase (217 aa).

Aspartate 62 serves as the catalytic Proton acceptor.

Belongs to the uracil-DNA glycosylase (UDG) superfamily. UNG family.

It localises to the cytoplasm. The catalysed reaction is Hydrolyzes single-stranded DNA or mismatched double-stranded DNA and polynucleotides, releasing free uracil.. Its function is as follows. Excises uracil residues from the DNA which can arise as a result of misincorporation of dUMP residues by DNA polymerase or due to deamination of cytosine. In Streptococcus pyogenes serotype M1, this protein is Uracil-DNA glycosylase.